The chain runs to 363 residues: Branched-chain-amino-acid aminotransferase 2 (363 aa).

Residue lysine 197 is modified to N6-(pyridoxal phosphate)lysine.

Belongs to the class-IV pyridoxal-phosphate-dependent aminotransferase family. Pyridoxal 5'-phosphate is required as a cofactor.

The enzyme catalyses L-leucine + 2-oxoglutarate = 4-methyl-2-oxopentanoate + L-glutamate. It carries out the reaction L-isoleucine + 2-oxoglutarate = (S)-3-methyl-2-oxopentanoate + L-glutamate. It catalyses the reaction L-valine + 2-oxoglutarate = 3-methyl-2-oxobutanoate + L-glutamate. It participates in amino-acid biosynthesis; L-isoleucine biosynthesis; L-isoleucine from 2-oxobutanoate: step 4/4. It functions in the pathway amino-acid biosynthesis; L-leucine biosynthesis; L-leucine from 3-methyl-2-oxobutanoate: step 4/4. Its pathway is amino-acid biosynthesis; L-valine biosynthesis; L-valine from pyruvate: step 4/4. Inhibited by canaline. In terms of biological role, transaminates branched-chain amino acids and ketoglutarate. The protein is Branched-chain-amino-acid aminotransferase 2 (ilvK) of Bacillus subtilis (strain 168).